The sequence spans 448 residues: Exodeoxyribonuclease 7 large subunit (448 aa).

This sequence belongs to the XseA family. In terms of assembly, heterooligomer composed of large and small subunits.

It is found in the cytoplasm. The catalysed reaction is Exonucleolytic cleavage in either 5'- to 3'- or 3'- to 5'-direction to yield nucleoside 5'-phosphates.. In terms of biological role, bidirectionally degrades single-stranded DNA into large acid-insoluble oligonucleotides, which are then degraded further into small acid-soluble oligonucleotides. In Hamiltonella defensa subsp. Acyrthosiphon pisum (strain 5AT), this protein is Exodeoxyribonuclease 7 large subunit.